The following is a 694-amino-acid chain: Polynucleotide 3'-phosphatase ZDP (694 aa).

2 PARP-type zinc fingers span residues 50 to 132 (VVAE…EQCG) and 165 to 247 (VIAD…EVNK). Residues cysteine 62, cysteine 65, histidine 93, cysteine 96, cysteine 177, cysteine 180, histidine 208, and cysteine 211 each contribute to the Zn(2+) site. Positions 266–331 (AIADNELTEE…SPDSSKVISE (66 aa)) are disordered. Residues 302 to 321 (ESKKPASDEISEQKTKDVKN) show a composition bias toward basic and acidic residues. Over residues 322–331 (SPDSSKVISE) the composition is skewed to polar residues. The segment at 328–410 (VISEYAKSSR…ALKELVQQCG (83 aa)) adopts a PARP-type 3 zinc-finger fold. Cysteine 340, cysteine 343, histidine 371, and cysteine 374 together coordinate Zn(2+).

The protein in the C-terminal section; belongs to the DNA 3' phosphatase family. Interacts with ROS1 (via the central region). Binds to XRCC1.

The protein resides in the nucleus. It localises to the nucleoplasm. It carries out the reaction a 3'end (2'-deoxyribonucleotide 3'-phosphate)-DNA + H2O = a 3'-end 2'-deoxyribonucleotide-DNA + phosphate. Activated by the presence of DNA. Stimulated by XRCC1. Functionally, nick-sensing 3'-phosphoesterase involved in a base excision repair pathway required for active DNA demethylation. The N-terminal DNA-binding domain binds specifically to gap sites and sharply bends the target DNA. Lacks 5'-kinase activity but is capable of 3'-phosphoglycolate end processing. Inactive on 3'-alpha,beta-unsaturated aldehyde (3'-dRP). Protects partially genes from transcriptional silencing by preventing promoter DNA hypermethylation. This chain is Polynucleotide 3'-phosphatase ZDP (ZDP), found in Arabidopsis thaliana (Mouse-ear cress).